Consider the following 559-residue polypeptide: Potassium-transporting ATPase potassium-binding subunit (559 aa).

A run of 12 helical transmembrane segments spans residues 7-27 (LLIA…GSGL), 63-83 (LLAL…LLFW), 132-152 (GLTV…FALI), 170-190 (LVRI…LFFI), 253-273 (MVQM…FGEA), 283-303 (LLWA…WAEV), 327-347 (FGVL…CGAV), 356-376 (ALGG…FGGV), 379-399 (GLYG…LMIG), 416-436 (MTAL…ALAM), 484-504 (LLAF…MAIA), and 524-544 (GALF…LTFI).

The protein belongs to the KdpA family. In terms of assembly, the system is composed of three essential subunits: KdpA, KdpB and KdpC.

The protein localises to the cell inner membrane. Functionally, part of the high-affinity ATP-driven potassium transport (or Kdp) system, which catalyzes the hydrolysis of ATP coupled with the electrogenic transport of potassium into the cytoplasm. This subunit binds the periplasmic potassium ions and delivers the ions to the membrane domain of KdpB through an intramembrane tunnel. In Salmonella arizonae (strain ATCC BAA-731 / CDC346-86 / RSK2980), this protein is Potassium-transporting ATPase potassium-binding subunit.